The chain runs to 119 residues: Holo-[acyl-carrier-protein] synthase (119 aa).

Residues D8 and E60 each contribute to the Mg(2+) site.

This sequence belongs to the P-Pant transferase superfamily. AcpS family. The cofactor is Mg(2+).

Its subcellular location is the cytoplasm. The catalysed reaction is apo-[ACP] + CoA = holo-[ACP] + adenosine 3',5'-bisphosphate + H(+). Functionally, transfers the 4'-phosphopantetheine moiety from coenzyme A to a Ser of acyl-carrier-protein. The protein is Holo-[acyl-carrier-protein] synthase of Mycoplasma pneumoniae (strain ATCC 29342 / M129 / Subtype 1) (Mycoplasmoides pneumoniae).